The chain runs to 23 residues: Septenin 2 (23 aa).

In terms of tissue distribution, expressed in skin glands.

It localises to the secreted. In terms of biological role, may act as an antimicrobial peptide. This is Septenin 2 from Osteopilus septentrionalis (Cuban treefrog).